A 259-amino-acid polypeptide reads, in one-letter code: Protein unc-50 homolog (259 aa).

The residue at position 1 (Met1) is an N-acetylmethionine. Topologically, residues 1 to 82 (MLPSTSLNSS…TKDQWARDDP (82 aa)) are cytoplasmic. A Phosphoserine modification is found at Ser6. A helical membrane pass occupies residues 83 to 103 (AFLVLLSIWLCVSTIGFGFVL). The Lumenal segment spans residues 104–115 (DMGFFETIKLLL). The chain crosses the membrane as a helical span at residues 116-136 (WVVFIDCVGVGLLISTLMWFI). The Cytoplasmic segment spans residues 137-163 (SNKYLVKRQSRDYDVEWGYAFDVHLNA). A helical transmembrane segment spans residues 164–184 (FYPLLVILHFIQLFFINHVIL). At 185–187 (TDT) the chain is on the lumenal side. A helical transmembrane segment spans residues 188–208 (FIGYLVGNTLWLIAVGYYIYV). The Cytoplasmic segment spans residues 209 to 222 (TFLGYSALPFLKNT). Residues 223-243 (VVLLYPFAPLIVLYGLSLALG) traverse the membrane as a helical segment. The Lumenal segment spans residues 244 to 259 (WNFTHTLCSFYKYRVK).

Belongs to the unc-50 family. As to expression, expressed in brain, kidney and testis, and at lower levels in heart.

It localises to the nucleus inner membrane. Its subcellular location is the golgi apparatus membrane. Involved in the cell surface expression of neuronal nicotinic receptors. Binds RNA. The polypeptide is Protein unc-50 homolog (Unc50) (Rattus norvegicus (Rat)).